We begin with the raw amino-acid sequence, 1065 residues long: Isoleucine--tRNA ligase (1065 aa).

Positions 49 to 59 match the 'HIGH' region motif; it reads PYVSGAIHLGT. The 'KMSKS' region signature appears at 625 to 629; it reads KMSKS. Lysine 628 provides a ligand contact to ATP.

The protein belongs to the class-I aminoacyl-tRNA synthetase family. IleS type 2 subfamily. In terms of assembly, monomer. It depends on Zn(2+) as a cofactor.

The protein resides in the cytoplasm. It carries out the reaction tRNA(Ile) + L-isoleucine + ATP = L-isoleucyl-tRNA(Ile) + AMP + diphosphate. Catalyzes the attachment of isoleucine to tRNA(Ile). As IleRS can inadvertently accommodate and process structurally similar amino acids such as valine, to avoid such errors it has two additional distinct tRNA(Ile)-dependent editing activities. One activity is designated as 'pretransfer' editing and involves the hydrolysis of activated Val-AMP. The other activity is designated 'posttransfer' editing and involves deacylation of mischarged Val-tRNA(Ile). In Thermococcus kodakarensis (strain ATCC BAA-918 / JCM 12380 / KOD1) (Pyrococcus kodakaraensis (strain KOD1)), this protein is Isoleucine--tRNA ligase.